The following is a 126-amino-acid chain: MVMKNVLLVGAGGFAGSVARYLVALAVPFSGTGFPFATFAVNLLGSFLIGFISELALSTTLLSPEARLLLTTGFCGGFTTFSTAMYETGGLMRDGEALYASLYVAGSLAGGLACLFSGTLLAKLWQ.

The next 4 membrane-spanning stretches (helical) occupy residues 6 to 26 (VLLV…VALA), 32 to 52 (TGFP…IGFI), 68 to 90 (LLLT…ETGG), and 102 to 122 (LYVA…TLLA). Na(+)-binding residues include G76 and T79.

Belongs to the fluoride channel Fluc/FEX (TC 1.A.43) family.

It localises to the cell inner membrane. The enzyme catalyses fluoride(in) = fluoride(out). Its activity is regulated as follows. Na(+) is not transported, but it plays an essential structural role and its presence is essential for fluoride channel function. In terms of biological role, fluoride-specific ion channel. Important for reducing fluoride concentration in the cell, thus reducing its toxicity. This Chlorobaculum tepidum (strain ATCC 49652 / DSM 12025 / NBRC 103806 / TLS) (Chlorobium tepidum) protein is Fluoride-specific ion channel FluC.